The sequence spans 744 residues: Catalase A (744 aa).

Residues His-93 and Asn-166 contribute to the active site. Tyr-380 provides a ligand contact to heme.

It belongs to the catalase family. Heme serves as cofactor.

The protein localises to the peroxisome matrix. It carries out the reaction 2 H2O2 = O2 + 2 H2O. In terms of biological role, catalyzes the degradation of hydrogen peroxide (H(2)O(2)) generated by peroxisomal oxidases to water and oxygen, thereby protecting cells from the toxic effects of hydrogen peroxide. This is Catalase A (catA) from Emericella nidulans (strain FGSC A4 / ATCC 38163 / CBS 112.46 / NRRL 194 / M139) (Aspergillus nidulans).